A 130-amino-acid polypeptide reads, in one-letter code: Small ribosomal subunit protein uS9 (130 aa).

The protein belongs to the universal ribosomal protein uS9 family.

The protein is Small ribosomal subunit protein uS9 of Lawsonia intracellularis (strain PHE/MN1-00).